A 129-amino-acid polypeptide reads, in one-letter code: Small ribosomal subunit protein uS8c (129 aa).

This sequence belongs to the universal ribosomal protein uS8 family. In terms of assembly, part of the 30S ribosomal subunit.

The protein localises to the plastid. It is found in the chloroplast. Its function is as follows. One of the primary rRNA binding proteins, it binds directly to 16S rRNA central domain where it helps coordinate assembly of the platform of the 30S subunit. This Nephroselmis olivacea (Green alga) protein is Small ribosomal subunit protein uS8c (rps8).